The chain runs to 220 residues: Ribose-5-phosphate isomerase A (220 aa).

Residues 28 to 31 (TGST), 81 to 84 (DGAD), and 94 to 97 (KGGG) each bind substrate. The active-site Proton acceptor is the Glu-103. Lys-121 is a binding site for substrate.

It belongs to the ribose 5-phosphate isomerase family. In terms of assembly, homodimer.

It catalyses the reaction aldehydo-D-ribose 5-phosphate = D-ribulose 5-phosphate. The protein operates within carbohydrate degradation; pentose phosphate pathway; D-ribose 5-phosphate from D-ribulose 5-phosphate (non-oxidative stage): step 1/1. Catalyzes the reversible conversion of ribose-5-phosphate to ribulose 5-phosphate. This Vesicomyosocius okutanii subsp. Calyptogena okutanii (strain HA) protein is Ribose-5-phosphate isomerase A.